The chain runs to 241 residues: Ribonuclease PH (241 aa).

Residues Arg89 and 127-129 (GTR) each bind phosphate.

Belongs to the RNase PH family. As to quaternary structure, homohexameric ring arranged as a trimer of dimers.

It catalyses the reaction tRNA(n+1) + phosphate = tRNA(n) + a ribonucleoside 5'-diphosphate. In terms of biological role, phosphorolytic 3'-5' exoribonuclease that plays an important role in tRNA 3'-end maturation. Removes nucleotide residues following the 3'-CCA terminus of tRNAs; can also add nucleotides to the ends of RNA molecules by using nucleoside diphosphates as substrates, but this may not be physiologically important. Probably plays a role in initiation of 16S rRNA degradation (leading to ribosome degradation) during starvation. This Xanthomonas campestris pv. campestris (strain 8004) protein is Ribonuclease PH.